The sequence spans 199 residues: Transcription regulator complex subunit bur6 (199 aa).

The disordered stretch occupies residues 106–199 (PPIKAERKTK…SEASSASGDE (94 aa)). Basic residues predominate over residues 112-121 (RKTKRPRARR). A compositionally biased stretch (polar residues) spans 185-199 (SDKTTSEASSASGDE).

The protein belongs to the NC2 alpha/DRAP1 family.

It is found in the nucleus. Functionally, transcription regulator complex subunit that is essential for cell cycle progression. This is Transcription regulator complex subunit bur6 from Schizosaccharomyces pombe (strain 972 / ATCC 24843) (Fission yeast).